We begin with the raw amino-acid sequence, 161 residues long: Ribonuclease P protein component 2 (161 aa).

The protein belongs to the eukaryotic/archaeal RNase P protein component 2 family. As to quaternary structure, consists of a catalytic RNA component and at least 4-5 protein subunits.

The protein resides in the cytoplasm. It carries out the reaction Endonucleolytic cleavage of RNA, removing 5'-extranucleotides from tRNA precursor.. Functionally, part of ribonuclease P, a protein complex that generates mature tRNA molecules by cleaving their 5'-ends. This is Ribonuclease P protein component 2 from Methanopyrus kandleri (strain AV19 / DSM 6324 / JCM 9639 / NBRC 100938).